The sequence spans 311 residues: Methionyl-tRNA formyltransferase (311 aa).

Position 110-113 (110-113) interacts with (6S)-5,6,7,8-tetrahydrofolate; the sequence is SLLP.

Belongs to the Fmt family.

The enzyme catalyses L-methionyl-tRNA(fMet) + (6R)-10-formyltetrahydrofolate = N-formyl-L-methionyl-tRNA(fMet) + (6S)-5,6,7,8-tetrahydrofolate + H(+). Attaches a formyl group to the free amino group of methionyl-tRNA(fMet). The formyl group appears to play a dual role in the initiator identity of N-formylmethionyl-tRNA by promoting its recognition by IF2 and preventing the misappropriation of this tRNA by the elongation apparatus. The polypeptide is Methionyl-tRNA formyltransferase (Streptococcus pyogenes serotype M18 (strain MGAS8232)).